Here is a 382-residue protein sequence, read N- to C-terminus: Mannitol-1-phosphate 5-dehydrogenase (382 aa).

3 to 14 (ALHFGAGNIGRG) contacts NAD(+). An N6-acetyllysine modification is found at Lys269.

This sequence belongs to the mannitol dehydrogenase family.

It carries out the reaction D-mannitol 1-phosphate + NAD(+) = beta-D-fructose 6-phosphate + NADH + H(+). This is Mannitol-1-phosphate 5-dehydrogenase from Escherichia coli O17:K52:H18 (strain UMN026 / ExPEC).